The following is a 507-amino-acid chain: ATP synthase subunit alpha, chloroplastic (507 aa).

Gly170–Thr177 is a binding site for ATP. Thr257 carries the phosphothreonine modification.

The protein belongs to the ATPase alpha/beta chains family. As to quaternary structure, F-type ATPases have 2 components, CF(1) - the catalytic core - and CF(0) - the membrane proton channel. CF(1) has five subunits: alpha(3), beta(3), gamma(1), delta(1), epsilon(1). CF(0) has four main subunits: a, b, b' and c.

Its subcellular location is the plastid. The protein resides in the chloroplast thylakoid membrane. The catalysed reaction is ATP + H2O + 4 H(+)(in) = ADP + phosphate + 5 H(+)(out). In terms of biological role, produces ATP from ADP in the presence of a proton gradient across the membrane. The alpha chain is a regulatory subunit. This Arabis hirsuta (Hairy rock-cress) protein is ATP synthase subunit alpha, chloroplastic.